Reading from the N-terminus, the 87-residue chain is DNA-directed RNA polymerase subunit omega (87 aa).

The protein belongs to the RNA polymerase subunit omega family. The RNAP catalytic core consists of 2 alpha, 1 beta, 1 beta' and 1 omega subunit. When a sigma factor is associated with the core the holoenzyme is formed, which can initiate transcription.

It catalyses the reaction RNA(n) + a ribonucleoside 5'-triphosphate = RNA(n+1) + diphosphate. In terms of biological role, promotes RNA polymerase assembly. Latches the N- and C-terminal regions of the beta' subunit thereby facilitating its interaction with the beta and alpha subunits. The chain is DNA-directed RNA polymerase subunit omega from Pseudomonas fluorescens (strain SBW25).